A 449-amino-acid polypeptide reads, in one-letter code: Phosphoglucosamine mutase (449 aa).

Ser-100 serves as the catalytic Phosphoserine intermediate. The Mg(2+) site is built by Ser-100, Asp-241, Asp-243, and Asp-245. Ser-100 is subject to Phosphoserine.

Belongs to the phosphohexose mutase family. Mg(2+) is required as a cofactor. Activated by phosphorylation.

The enzyme catalyses alpha-D-glucosamine 1-phosphate = D-glucosamine 6-phosphate. Functionally, catalyzes the conversion of glucosamine-6-phosphate to glucosamine-1-phosphate. In Clostridium botulinum (strain ATCC 19397 / Type A), this protein is Phosphoglucosamine mutase.